We begin with the raw amino-acid sequence, 397 residues long: Serpin B10 (397 aa).

Residues Cys68 and Cys395 are joined by a disulfide bond. A Nuclear localization signal motif is present at residues 74–77; the sequence is KKRK.

Belongs to the serpin family. Ov-serpin subfamily. In terms of tissue distribution, expressed specifically in myeloid cells and the bone marrow.

It localises to the nucleus. It is found in the cytoplasm. Protease inhibitor that may play a role in the regulation of protease activities during hematopoiesis and apoptosis induced by TNF. May regulate protease activities in the cytoplasm and in the nucleus. The chain is Serpin B10 (SERPINB10) from Homo sapiens (Human).